Consider the following 416-residue polypeptide: Adenylosuccinate synthetase (416 aa).

GTP contacts are provided by residues 13–19 (GDEGKGK) and 41–43 (GHT). Asp-14 functions as the Proton acceptor in the catalytic mechanism. Residues Asp-14 and Gly-41 each contribute to the Mg(2+) site. IMP-binding positions include 14–17 (DEGK), 39–42 (NAGH), Thr-126, Arg-140, Gln-220, Thr-235, and Arg-299. The active-site Proton donor is His-42. Position 295 to 301 (295 to 301 (TTTGRKR)) interacts with substrate. GTP contacts are provided by residues Arg-301, 327–329 (KLD), and 405–407 (STS).

This sequence belongs to the adenylosuccinate synthetase family. In terms of assembly, homodimer. Mg(2+) serves as cofactor.

The protein localises to the cytoplasm. It catalyses the reaction IMP + L-aspartate + GTP = N(6)-(1,2-dicarboxyethyl)-AMP + GDP + phosphate + 2 H(+). It functions in the pathway purine metabolism; AMP biosynthesis via de novo pathway; AMP from IMP: step 1/2. In terms of biological role, plays an important role in the de novo pathway of purine nucleotide biosynthesis. Catalyzes the first committed step in the biosynthesis of AMP from IMP. The sequence is that of Adenylosuccinate synthetase from Campylobacter fetus subsp. fetus (strain 82-40).